Consider the following 301-residue polypeptide: F1 operon positive regulatory protein (301 aa).

In terms of domain architecture, HTH araC/xylS-type spans Asn-8–Ile-107. 2 consecutive DNA-binding regions (H-T-H motif) follow at residues Asp-26–Val-47 and Ile-74–Phe-97.

In terms of biological role, positive regulator of F1 operon expression. The protein is F1 operon positive regulatory protein (caf1R) of Yersinia pestis.